A 215-amino-acid chain; its full sequence is Cytidylate kinase (215 aa).

10 to 18 contributes to the ATP binding site; the sequence is GPAASGKGT.

This sequence belongs to the cytidylate kinase family. Type 1 subfamily.

The protein localises to the cytoplasm. The enzyme catalyses CMP + ATP = CDP + ADP. It catalyses the reaction dCMP + ATP = dCDP + ADP. This is Cytidylate kinase from Bartonella quintana (strain Toulouse) (Rochalimaea quintana).